Consider the following 353-residue polypeptide: Photosystem II D2 protein (353 aa).

Threonine 2 bears the N-acetylthreonine mark. Threonine 2 carries the phosphothreonine modification. Residues 41-61 traverse the membrane as a helical segment; that stretch reads CAYFALGGWFTGTTFVTSWYT. Position 118 (histidine 118) interacts with chlorophyll a. The helical transmembrane segment at 125-141 threads the bilayer; that stretch reads GFMLRQFELARSVQLRP. Residues glutamine 130 and asparagine 143 each coordinate pheophytin a. Residues 153 to 166 traverse the membrane as a helical segment; the sequence is VFVSVFLIYPLGQS. Residue histidine 198 participates in chlorophyll a binding. The chain crosses the membrane as a helical span at residues 208–228; sequence AALLCAIHGATVENTLFEDGD. Histidine 215 and phenylalanine 262 together coordinate a plastoquinone. Histidine 215 contacts Fe cation. Histidine 269 contacts Fe cation. A helical transmembrane segment spans residues 279–295; that stretch reads GLWMSALGVVGLALNLR.

Belongs to the reaction center PufL/M/PsbA/D family. In terms of assembly, PSII is composed of 1 copy each of membrane proteins PsbA, PsbB, PsbC, PsbD, PsbE, PsbF, PsbH, PsbI, PsbJ, PsbK, PsbL, PsbM, PsbT, PsbX, PsbY, PsbZ, Psb30/Ycf12, at least 3 peripheral proteins of the oxygen-evolving complex and a large number of cofactors. It forms dimeric complexes. Interacts with PAM68. The D1/D2 heterodimer binds P680, chlorophylls that are the primary electron donor of PSII, and subsequent electron acceptors. It shares a non-heme iron and each subunit binds pheophytin, quinone, additional chlorophylls, carotenoids and lipids. There is also a Cl(-1) ion associated with D1 and D2, which is required for oxygen evolution. The PSII complex binds additional chlorophylls, carotenoids and specific lipids. is required as a cofactor. In terms of processing, phosphorylation occurs in normal plant growth light conditions. Rapid dephosphorylation occurs during heat shock.

The protein resides in the plastid. It localises to the chloroplast thylakoid membrane. The enzyme catalyses 2 a plastoquinone + 4 hnu + 2 H2O = 2 a plastoquinol + O2. In terms of biological role, photosystem II (PSII) is a light-driven water:plastoquinone oxidoreductase that uses light energy to abstract electrons from H(2)O, generating O(2) and a proton gradient subsequently used for ATP formation. It consists of a core antenna complex that captures photons, and an electron transfer chain that converts photonic excitation into a charge separation. The D1/D2 (PsbA/PsbD) reaction center heterodimer binds P680, the primary electron donor of PSII as well as several subsequent electron acceptors. D2 is needed for assembly of a stable PSII complex. This Arabidopsis thaliana (Mouse-ear cress) protein is Photosystem II D2 protein.